The primary structure comprises 1464 residues: DNA polymerase III PolC-type (1464 aa).

In terms of domain architecture, Exonuclease spans 426–582 (YVVFDVETTG…YDAEATGRLL (157 aa)).

The protein belongs to the DNA polymerase type-C family. PolC subfamily.

Its subcellular location is the cytoplasm. The enzyme catalyses DNA(n) + a 2'-deoxyribonucleoside 5'-triphosphate = DNA(n+1) + diphosphate. Its function is as follows. Required for replicative DNA synthesis. This DNA polymerase also exhibits 3' to 5' exonuclease activity. The protein is DNA polymerase III PolC-type of Streptococcus thermophilus (strain CNRZ 1066).